A 316-amino-acid polypeptide reads, in one-letter code: Ribosomal RNA small subunit methyltransferase H (316 aa).

S-adenosyl-L-methionine contacts are provided by residues 32–34 (AGH), D52, F79, D100, and Q107.

The protein belongs to the methyltransferase superfamily. RsmH family.

Its subcellular location is the cytoplasm. It catalyses the reaction cytidine(1402) in 16S rRNA + S-adenosyl-L-methionine = N(4)-methylcytidine(1402) in 16S rRNA + S-adenosyl-L-homocysteine + H(+). Specifically methylates the N4 position of cytidine in position 1402 (C1402) of 16S rRNA. The protein is Ribosomal RNA small subunit methyltransferase H of Lysinibacillus sphaericus (strain C3-41).